Here is a 110-residue protein sequence, read N- to C-terminus: U1-lycotoxin-Ls1jj (110 aa).

The N-terminal stretch at 1–20 (MKFVLLFGVLLVTLFSYSSA) is a signal peptide. Residues 21–44 (EMLDDFDQADEDELLSLIEKEEAR) constitute a propeptide that is removed on maturation. Disulfide bonds link Cys-47–Cys-62, Cys-54–Cys-71, Cys-61–Cys-89, and Cys-73–Cys-87.

Belongs to the neurotoxin 19 (CSTX) family. 03 subfamily. Expressed by the venom gland.

It localises to the secreted. This chain is U1-lycotoxin-Ls1jj, found in Lycosa singoriensis (Wolf spider).